A 485-amino-acid polypeptide reads, in one-letter code: Zinc finger protein 577 (485 aa).

Positions 1-21 are disordered; that stretch reads MKNATIVMSVRREQGSSSGEG. Residues 23 to 94 form the KRAB domain; sequence LSFEDVAVGF…EGAAHSQICP (72 aa). The segment at 158–180 adopts a C2H2-type 1; degenerate zinc-finger fold; it reads HECSVCGRAFSRKAQLIQHQRTE. 7 C2H2-type zinc fingers span residues 186–208, 214–236, 242–264, 270–292, 298–320, 326–348, and 354–376; these read HGCG…QRTH, HECS…QRTH, YRCS…QRSH, YGCS…QRLH, YKCS…QRIH, YECS…QRTH, and YSCR…EKTH.

It belongs to the krueppel C2H2-type zinc-finger protein family.

It localises to the nucleus. May be involved in transcriptional regulation. The sequence is that of Zinc finger protein 577 (ZNF577) from Homo sapiens (Human).